Reading from the N-terminus, the 158-residue chain is SH3 domain-binding glutamic acid-rich protein homolog (158 aa).

Residues 40–51 (TEPGKESEKELM) show a composition bias toward basic and acidic residues. The tract at residues 40-74 (TEPGKESEKELMQNKSTSNGGTVSDPEPRHPLPPQ) is disordered. Residues 52–61 (QNKSTSNGGT) are compositionally biased toward polar residues. The short motif at 67 to 73 (PRHPLPP) is the SH3-binding element. Residue T109 is modified to Phosphothreonine. Residues 118-158 (LKQENGDAKKEEAETEAEDKKTEAGDGDVDVKEEAAEKAEV) are disordered.

It belongs to the SH3BGR family.

The sequence is that of SH3 domain-binding glutamic acid-rich protein homolog (Sh3beta) from Drosophila melanogaster (Fruit fly).